The sequence spans 497 residues: Argininosuccinate lyase (497 aa).

Belongs to the lyase 1 family. Argininosuccinate lyase subfamily.

It localises to the cytoplasm. The enzyme catalyses 2-(N(omega)-L-arginino)succinate = fumarate + L-arginine. The protein operates within amino-acid biosynthesis; L-arginine biosynthesis; L-arginine from L-ornithine and carbamoyl phosphate: step 3/3. In Clavibacter michiganensis subsp. michiganensis (strain NCPPB 382), this protein is Argininosuccinate lyase.